We begin with the raw amino-acid sequence, 95 residues long: DNA-directed RNA polymerase subunit Rpo11 (95 aa).

This sequence belongs to the archaeal Rpo11/eukaryotic RPB11/RPC19 RNA polymerase subunit family. In terms of assembly, part of the RNA polymerase complex.

It is found in the cytoplasm. The enzyme catalyses RNA(n) + a ribonucleoside 5'-triphosphate = RNA(n+1) + diphosphate. Functionally, DNA-dependent RNA polymerase (RNAP) catalyzes the transcription of DNA into RNA using the four ribonucleoside triphosphates as substrates. This is DNA-directed RNA polymerase subunit Rpo11 from Pyrococcus furiosus (strain ATCC 43587 / DSM 3638 / JCM 8422 / Vc1).